The sequence spans 207 residues: MVQGTLYIVSAPSGAGKSSLIQALLKTQPLYDTQVSISHTTRAKRPGENHGEHYFFVSEKEFCQMIDDDAFLEHAKVFENYYGTSRLAIEQVLATGVDVFLDIDWQGAQQIRAKMPTARSIFILPPSKTELDRRLRGRGQDSEEVIAKRMEQAVAEMAHYAEYDYLIVNDDFNLALSDLKTIIRAERLRLGRQKQRHDALISKLLAD.

The Guanylate kinase-like domain maps to 4-184; it reads GTLYIVSAPS…ALSDLKTIIR (181 aa). ATP is bound at residue 11–18; the sequence is APSGAGKS.

It belongs to the guanylate kinase family.

The protein resides in the cytoplasm. It carries out the reaction GMP + ATP = GDP + ADP. Functionally, essential for recycling GMP and indirectly, cGMP. This is Guanylate kinase from Yersinia pestis bv. Antiqua (strain Antiqua).